Here is a 93-residue protein sequence, read N- to C-terminus: Molybdopterin synthase sulfur carrier subunit (93 aa).

Position 93 is a 1-thioglycine; alternate (Gly93). Glycyl adenylate; alternate is present on Gly93.

The protein belongs to the MoaD family. MOCS2A subfamily. Heterotetramer; composed of 2 small (MOCS2A) and 2 large (MOCS2B) subunits. Post-translationally, C-terminal thiocarboxylation occurs in 2 steps, it is first acyl-adenylated (-COAMP) via the hesA/moeB/thiF part of uba4, then thiocarboxylated (-COSH) via the rhodanese domain of uba4.

It localises to the cytoplasm. It participates in cofactor biosynthesis; molybdopterin biosynthesis. Functionally, acts as a sulfur carrier required for molybdopterin biosynthesis. Component of the molybdopterin synthase complex that catalyzes the conversion of precursor Z into molybdopterin by mediating the incorporation of 2 sulfur atoms into precursor Z to generate a dithiolene group. In the complex, serves as sulfur donor by being thiocarboxylated (-COSH) at its C-terminus by uba4. After interaction with MOCS2B, the sulfur is then transferred to precursor Z to form molybdopterin. This chain is Molybdopterin synthase sulfur carrier subunit, found in Pyrenophora tritici-repentis (strain Pt-1C-BFP) (Wheat tan spot fungus).